A 621-amino-acid polypeptide reads, in one-letter code: Protein Rep78 (621 aa).

In terms of domain architecture, PV NS1-Nuc spans 1–199; the sequence is MPGFYEIVIK…AQHLTHVSQT (199 aa). A divalent metal cation contacts are provided by glutamate 83, histidine 90, and histidine 92. Residues 90–92 carry the RCR-2 motif; the sequence is HMH. Residue tyrosine 156 is the For nuclease activity of the active site. The RCR-3 signature appears at 156–160; that stretch reads YLLPK. The segment covering 196 to 211 has biased composition (polar residues); sequence VSQTQEQNKENQNPNS. A disordered region spans residues 196–216; sequence VSQTQEQNKENQNPNSDAPVI. The SF3 helicase domain maps to 308-463; the sequence is DPQYAASVFL…LDHDFGKVTK (156 aa). 334-341 lines the ATP pocket; that stretch reads GPATTGKT. The interval 489 to 520 is disordered; that stretch reads GGAKKRPAPSDADISEPKRVRESVAQPSTSDA.

In terms of assembly, hexamer when associated with the viral DNA ori sequence. Interacts with host PRKX. Interacts with host TOPORS. Interacts with host TBP and SUB1/PC4; these interactions play important roles in transcriptional regulation. A divalent metal cation serves as cofactor.

The protein resides in the host nucleus. In terms of biological role, plays an essential role in the initiation of viral DNA synthesis. Binds specifically to an inverted terminal repeat element (ITR) on the 3' and 5' ends of the viral DNA, where it cleaves a site specifically to generate a priming site for initiation of the synthesis of a complementary strand. Also plays a role as transcriptional regulator, DNA helicase and as key factors in site-specific integration of the viral genome. Regulates host PKA activity by interacting with host PRKX as a mechanism of interfering with helper virus propagation and promoting its own replication. Inhibits the host cell cycle G1/S, S and G2/M transitions. These arrests may provide essential cellular factors for viral DNA replication. The sequence is that of Protein Rep78 (Rep78) from Adeno-associated virus 2 (isolate Srivastava/1982) (AAV-2).